Reading from the N-terminus, the 567-residue chain is Microtubule-associated protein 70-1 (567 aa).

Positions 38–341 (VRVELTRLEN…AARSEAQLKD (304 aa)) form a coiled coil. The interval 220 to 440 (ILDRMHRQKV…SGMNVSTDSS (221 aa)) is required for targeting to microtubules. Disordered stretches follow at residues 425-457 (KGHV…EFTS) and 534-567 (LEKE…ARNM). The span at 440–453 (SEDKESNNSDEKAN) shows a compositional bias: basic and acidic residues. A coiled-coil region spans residues 516-545 (KKRRMEVAAMEKEMAALRLEKEQDNKAKRF).

The protein belongs to the MAP70 family.

It localises to the cytoplasm. The protein resides in the cytoskeleton. In terms of biological role, plant-specific protein that interact with microtubules. This is Microtubule-associated protein 70-1 (MAP70.1) from Oryza sativa subsp. japonica (Rice).